Consider the following 149-residue polypeptide: Stathmin (149 aa).

At A2 the chain carries N-acetylalanine. S4 is subject to Phosphoserine. The 142-residue stretch at 4–145 folds into the SLD domain; sequence SDIQVKELEK…NKESKDPADE (142 aa). The residue at position 9 (K9) is an N6-acetyllysine. S16 carries the phosphoserine; by PKA modification. S25 is modified (phosphoserine; by CDK1, MAPK1 and MAPK3). The disordered stretch occupies residues 27–46; the sequence is RSKESVPDFPLSPPKKKDLS. The residue at position 29 (K29) is an N6-methyllysine. The residue at position 31 (S31) is a Phosphoserine. Residue S38 is modified to Phosphoserine; by CDK1, MAPK1 and MAPK3. A coiled-coil region spans residues 41–140; it reads KKKDLSLEEI…EEVRKNKESK (100 aa). At S63 the chain carries Phosphoserine; by PKA. N6-acetyllysine is present on residues K100 and K119. Positions 104–143 are enriched in basic and acidic residues; that stretch reads KMEANKENREAQMAAKLERLREKDKHVEEVRKNKESKDPA. Positions 104 to 149 are disordered; sequence KMEANKENREAQMAAKLERLREKDKHVEEVRKNKESKDPADETEAD.

The protein belongs to the stathmin family. Binds to two alpha/beta-tubulin heterodimers. Interacts with KIST. Post-translationally, many different phosphorylated forms are observed depending on specific combinations among the sites which can be phosphorylated. MAPK is responsible for the phosphorylation of stathmin in response to NGF. Phosphorylation at Ser-16 seems to be required for neuron polarization. Highly expressed in the lateral nucleus of the amygdala.

It localises to the cytoplasm. The protein resides in the cytoskeleton. Functionally, involved in the regulation of the microtubule (MT) filament system by destabilizing microtubules. Prevents assembly and promotes disassembly of microtubules. Phosphorylation at Ser-16 may be required for axon formation during neurogenesis. Involved in the control of the learned and innate fear. This is Stathmin (Stmn1) from Mus musculus (Mouse).